We begin with the raw amino-acid sequence, 261 residues long: Proteasome subunit alpha type-4 (261 aa).

Phosphoserine is present on residues Ser13 and Ser75. Position 127 is an N6-acetyllysine (Lys127). Residue Ser173 is modified to Phosphoserine. N6-acetyllysine is present on Lys176. A disordered region spans residues 240 to 261; it reads HEEEEAKAEREKKEKEQKEKDK.

The protein belongs to the peptidase T1A family. In terms of assembly, the 26S proteasome consists of a 20S proteasome core and two 19S regulatory subunits. The 20S proteasome core is a barrel-shaped complex made of 28 subunits that are arranged in four stacked rings. The two outer rings are each formed by seven alpha subunits, and the two inner rings are formed by seven beta subunits. The proteolytic activity is exerted by three beta-subunits PSMB5, PSMB6 and PSMB7.

The protein localises to the cytoplasm. It is found in the nucleus. Its function is as follows. Component of the 20S core proteasome complex involved in the proteolytic degradation of most intracellular proteins. This complex plays numerous essential roles within the cell by associating with different regulatory particles. Associated with two 19S regulatory particles, forms the 26S proteasome and thus participates in the ATP-dependent degradation of ubiquitinated proteins. The 26S proteasome plays a key role in the maintenance of protein homeostasis by removing misfolded or damaged proteins that could impair cellular functions, and by removing proteins whose functions are no longer required. Associated with the PA200 or PA28, the 20S proteasome mediates ubiquitin-independent protein degradation. This type of proteolysis is required in several pathways including spermatogenesis (20S-PA200 complex) or generation of a subset of MHC class I-presented antigenic peptides (20S-PA28 complex). The chain is Proteasome subunit alpha type-4 (PSMA4) from Bos taurus (Bovine).